A 323-amino-acid polypeptide reads, in one-letter code: Estradiol 17 beta-dehydrogenase 5 (323 aa).

NADP(+) contacts are provided by residues 20–24 and Asp50; that span reads GFGTY. The active-site Proton donor is the Tyr55. His117 is a binding site for substrate. NADP(+)-binding positions include 166 to 167, Gln190, 216 to 221, and 270 to 280; these read SN, YSALGS, and KSFSEKRIKEN.

Belongs to the aldo/keto reductase family. As to quaternary structure, monomer. In terms of processing, three forms are detected, probably due to post-translational modifications. As to expression, mainly found in liver. Also expressed weakly in kidney.

Its function is as follows. Active toward androgens, estrogens, and xenobiotic substrates. Also exhibits low 20 alpha-HSD activity. Shows a-stereospecificity in hydrogen transfer between cofactors and substrates (A-specific). Preferentially catalyzes the reduction of 4-androstenedione, 5-alpha-androstane-3,17-dione, androsterone and dehydroepiandrosterone to testosterone, dihydrotestosterone, 5-alpha-androstane-3-alpha,17-beta-diol and 5-androstene-3-beta,17-beta-diol, respectively. This is Estradiol 17 beta-dehydrogenase 5 (Akr1c6) from Mus musculus (Mouse).